A 481-amino-acid polypeptide reads, in one-letter code: Glutamyl-tRNA(Gln) amidotransferase subunit A (481 aa).

Active-site charge relay system residues include lysine 78 and serine 153. Serine 177 serves as the catalytic Acyl-ester intermediate.

It belongs to the amidase family. GatA subfamily. In terms of assembly, heterotrimer of A, B and C subunits.

It catalyses the reaction L-glutamyl-tRNA(Gln) + L-glutamine + ATP + H2O = L-glutaminyl-tRNA(Gln) + L-glutamate + ADP + phosphate + H(+). Functionally, allows the formation of correctly charged Gln-tRNA(Gln) through the transamidation of misacylated Glu-tRNA(Gln) in organisms which lack glutaminyl-tRNA synthetase. The reaction takes place in the presence of glutamine and ATP through an activated gamma-phospho-Glu-tRNA(Gln). The sequence is that of Glutamyl-tRNA(Gln) amidotransferase subunit A from Borreliella afzelii (strain PKo) (Borrelia afzelii).